We begin with the raw amino-acid sequence, 615 residues long: Neurosecretory protein VGF (615 aa).

Residues 1–22 (MKALRLSASALFCLLLINGLGA) form the signal peptide. Disordered stretches follow at residues 22–201 (AAPP…ESPG) and 218–257 (PERA…PKTH). Pro residues-rich tracts occupy residues 25 to 35 (PGRPEAQPPPL) and 129 to 141 (PESP…PRPQ). Residues 179–194 (ETAAAETETRTHTLTR) show a composition bias toward low complexity. A Pyrrolidone carboxylic acid modification is found at Q310. The disordered stretch occupies residues 342-600 (RQRGLGGRGL…EAEERRLQEQ (259 aa)). The span at 378-394 (VGEEDEEAAEAEAEAEE) shows a compositional bias: acidic residues. Positions 415–433 (AEDKRSQEETPGHRRKEAE) are enriched in basic and acidic residues. Phosphoserine; by FAM20C is present on S420. Position 424 is a phosphothreonine; by FAM20C (T424). Positions 434-448 (GTEEGGEEEDDEEMD) are enriched in acidic residues. The span at 487 to 497 (PPEPVPPPRAA) shows a compositional bias: pro residues. P577 bears the Proline amide mark. The segment covering 577-599 (PGREAQARRAQEEAEAEERRLQE) has biased composition (basic and acidic residues).

As to quaternary structure, interacts with HSPA8 on cell membrane. Interacts with C3AR1. Interacts with C1QBP. Post-translationally, multiple peptides are derived from VGF, with activities in synaptic plasticity, antidepression, penile erection, autonomic activation, and increases in energy expenditure. As to expression, central and peripheral nervous systems, synthesized exclusively in neuronal and neuroendocrine cells.

Its subcellular location is the secreted. It is found in the cytoplasmic vesicle. It localises to the secretory vesicle. Its function is as follows. Secreted polyprotein that is packaged and proteolytically processed by prohormone convertases PCSK1 and PCSK2 in a cell-type-specific manner. VGF and peptides derived from its processing play many roles in neurogenesis and neuroplasticity associated with learning, memory, depression and chronic pain. Functionally, plays a role in the control of body fluid homeostasis by regulating vasopressin release. Suppresses presynaptic glutamatergic neurons connected to vasopressin neurons. Plays a role in the control of body fluid homeostasis by regulating vasopressin release. Activates GABAergic interneurons which are inhibitory neurons of the nervous system and thereby suppresses presynaptic glutamatergic neurons. Also stimulates feeding behavior in an orexin-dependent manner in the hypothalamus. Functions as a positive regulator for the activation of orexin neurons resulting in elevated gastric acid secretion and gastric emptying. In terms of biological role, secreted multifunctional neuropeptide that binds to different cell receptors and thereby plays multiple physiological roles including modulation of energy expenditure, pain, response to stress, gastric regulation, glucose homeostasis as well as lipolysis. Activates the G-protein-coupled receptor C3AR1 via a folding-upon-binding mechanism leading to enhanced lipolysis in adipocytes. Interacts with C1QBP receptor in macrophages and microglia causing increased levels of intracellular calcium and hypersensitivity. Its function is as follows. Plays a role in the regulation of memory formation and depression-related behaviors potentially by influencing synaptic plasticity and neurogenesis. Induces acute and transient activation of the NTRK2/TRKB receptor and subsequent CREB phosphorylation. Also induces insulin secretion in insulinoma cells by increasing intracellular calcium mobilization. Functionally, has bactericidal activity against M.luteus, and antifungal activity against P. Pastoris. This Homo sapiens (Human) protein is Neurosecretory protein VGF (VGF).